Consider the following 212-residue polypeptide: MEVLIFELILIAVLIPLNSVVKKHVPKWKGKAGEKLVKRMLSKLDPKSYYVLHNVTVYTEYGDTTQIDHIVIAETGVFVVETKNYEGWIYGSEKAARWTQGIFRKKSSFQNPFHQNYKHIKAIEWLIEQQLPCISMAAFHPKCSLKRVNVHSKEKHVLYYNDLQKCIESYTDVQLTNDEVQHIYHTILRANIMDKDIEKKHVKYLHNKFAKQ.

The 118-residue stretch at 29–146 folds into the NERD domain; it reads KGKAGEKLVK…AAFHPKCSLK (118 aa).

This is an uncharacterized protein from Bacillus anthracis.